Here is a 746-residue protein sequence, read N- to C-terminus: Double-stranded RNA-specific editase B2 (746 aa).

2 disordered regions span residues 1–36 (MASV…KDKV) and 50–105 (SPGT…PLEE). A compositionally biased stretch (basic residues) spans 20-34 (CKSKRRRRRRSKRKD). Residues 23–35 (KRRRRRRSKRKDK) are R-domain (ssRNA-binding). 2 consecutive DRBM domains span residues 126–192 (TPKN…SFVQ) and 284–348 (NPVV…ALFD). An A to I editase domain is found at 415–742 (VLSSGTKCIS…VRKPPEQDQF (328 aa)). H439 contacts Zn(2+). E441 serves as the catalytic Proton donor. Residues C497 and C562 each coordinate Zn(2+).

In terms of tissue distribution, brain specific.

It localises to the nucleus. In terms of biological role, lacks editing activity. It prevents the binding of other ADAR enzymes to targets in vitro, and decreases the efficiency of these enzymes. Capable of binding to dsRNA but also to ssRNA. In Rattus norvegicus (Rat), this protein is Double-stranded RNA-specific editase B2 (Adarb2).